A 543-amino-acid polypeptide reads, in one-letter code: Aluminum-activated malate transporter 14 (543 aa).

Transmembrane regions (helical) follow at residues 56–76 (VGVS…FKGI), 80–100 (AIWA…ATLC), 106–126 (GLGT…ANDS), 129–149 (IFRA…ITYL), 164–184 (LIFL…DTVI), and 191–211 (FYTI…VFPI). The tract at residues 416-438 (DTNEAASYQNTGTPRGERMSRFG) is disordered. Residues 419 to 428 (EAASYQNTGT) show a composition bias toward polar residues. Positions 445–472 (RLRADTLERRSAAATNERKILRQQLSRI) form a coiled coil.

This sequence belongs to the aromatic acid exporter (TC 2.A.85) family.

The protein localises to the membrane. Its function is as follows. Malate transporter. The sequence is that of Aluminum-activated malate transporter 14 (ALMT14) from Arabidopsis thaliana (Mouse-ear cress).